We begin with the raw amino-acid sequence, 237 residues long: Ribitol-5-phosphate cytidylyltransferase (237 aa).

Residues 7 to 10 (LAGG) and 80 to 86 (GEDRNET) each bind CTP.

The protein belongs to the IspD/TarI cytidylyltransferase family. TarI subfamily.

It catalyses the reaction D-ribitol 5-phosphate + CTP + H(+) = CDP-L-ribitol + diphosphate. The protein operates within cell wall biogenesis; poly(ribitol phosphate) teichoic acid biosynthesis. In terms of biological role, catalyzes the transfer of the cytidylyl group of CTP to D-ribitol 5-phosphate. The protein is Ribitol-5-phosphate cytidylyltransferase of Listeria innocua serovar 6a (strain ATCC BAA-680 / CLIP 11262).